Here is a 119-residue protein sequence, read N- to C-terminus: Beta-2-microglobulin (119 aa).

The first 20 residues, 1 to 20 (MARTVATFFLMLVSLACLDA), serve as a signal peptide directing secretion. The Ig-like C1-type domain maps to 25–114 (PQVQVYTRHP…VTLKEPKVVT (90 aa)). Cys45 and Cys100 are joined by a disulfide.

Belongs to the beta-2-microglobulin family. As to quaternary structure, heterodimer of an alpha chain and a beta chain. Beta-2-microglobulin is the beta-chain of major histocompatibility complex class I molecules.

It localises to the secreted. Its function is as follows. Component of the class I major histocompatibility complex (MHC). Involved in the presentation of peptide antigens to the immune system. The polypeptide is Beta-2-microglobulin (B2M) (Sigmodon hispidus (Hispid cotton rat)).